The sequence spans 195 residues: dCTP deaminase (195 aa).

DCTP is bound by residues arginine 109 to arginine 114, aspartate 127, threonine 135 to glutamate 137, tyrosine 170, lysine 177, and glutamine 181. Glutamate 137 (proton donor/acceptor) is an active-site residue.

It belongs to the dCTP deaminase family. In terms of assembly, homotrimer.

The enzyme catalyses dCTP + H2O + H(+) = dUTP + NH4(+). It participates in pyrimidine metabolism; dUMP biosynthesis; dUMP from dCTP (dUTP route): step 1/2. In terms of biological role, catalyzes the deamination of dCTP to dUTP. The sequence is that of dCTP deaminase from Rhodospirillum rubrum (strain ATCC 11170 / ATH 1.1.1 / DSM 467 / LMG 4362 / NCIMB 8255 / S1).